The chain runs to 301 residues: Porphobilinogen deaminase (301 aa).

Cysteine 242 is subject to S-(dipyrrolylmethanemethyl)cysteine.

It belongs to the HMBS family. Monomer. It depends on dipyrromethane as a cofactor.

The enzyme catalyses 4 porphobilinogen + H2O = hydroxymethylbilane + 4 NH4(+). It participates in porphyrin-containing compound metabolism; protoporphyrin-IX biosynthesis; coproporphyrinogen-III from 5-aminolevulinate: step 2/4. In terms of biological role, tetrapolymerization of the monopyrrole PBG into the hydroxymethylbilane pre-uroporphyrinogen in several discrete steps. This Rickettsia akari (strain Hartford) protein is Porphobilinogen deaminase.